The primary structure comprises 827 residues: Periplasmic nitrate reductase (827 aa).

Residues 1-33 constitute a signal peptide (tat-type signal); the sequence is MNLSRRDFMKANAAMAAATAAGLTIPVKNVVAA. Residues 37-93 form the 4Fe-4S Mo/W bis-MGD-type domain; it reads IKWDKGVCRFCGTGCAVLVGTKDGRVVASQGDPDAEVNRGLNCIKGYFLPKIMYGKD. [4Fe-4S] cluster contacts are provided by Cys44, Cys47, Cys51, and Cys79. Mo-bis(molybdopterin guanine dinucleotide) is bound by residues Lys81, Gln148, Asn173, Cys177, 210–217, 241–245, 260–262, Met370, Gln374, Asn480, 506–507, Lys529, Asp556, and 716–725; these read WGSNMAEM, STYEH, QTD, SD, and TGRVLEHWHT. Phe792 is a binding site for substrate. 2 residues coordinate Mo-bis(molybdopterin guanine dinucleotide): Asn800 and Lys817.

This sequence belongs to the prokaryotic molybdopterin-containing oxidoreductase family. NasA/NapA/NarB subfamily. Component of the periplasmic nitrate reductase NapAB complex composed of NapA and NapB. [4Fe-4S] cluster is required as a cofactor. It depends on Mo-bis(molybdopterin guanine dinucleotide) as a cofactor. Post-translationally, predicted to be exported by the Tat system. The position of the signal peptide cleavage has not been experimentally proven.

The protein resides in the periplasm. The catalysed reaction is 2 Fe(II)-[cytochrome] + nitrate + 2 H(+) = 2 Fe(III)-[cytochrome] + nitrite + H2O. Catalytic subunit of the periplasmic nitrate reductase complex NapAB. Receives electrons from NapB and catalyzes the reduction of nitrate to nitrite. This Haemophilus influenzae (strain PittEE) protein is Periplasmic nitrate reductase.